The chain runs to 640 residues: Zinc finger protein 549 (640 aa).

The KRAB domain occupies 27–140; that stretch reads VTFEDIAVYF…PYTSVASGKW (114 aa). The C2H2-type 1; degenerate zinc finger occupies 217-241; it reads FQQRRYKCEQVFNEKVHVTEHQRVH. Residue K223 forms a Glycyl lysine isopeptide (Lys-Gly) (interchain with G-Cter in SUMO2) linkage. A C2H2-type 2; degenerate zinc finger spans residues 247-269; sequence YKRREYGKSLNSKYLFVEHQRTH. 13 consecutive C2H2-type zinc fingers follow at residues 275-298, 304-326, 332-355, 361-383, 389-411, 417-439, 445-467, 473-495, 501-523, 529-551, 557-579, 585-607, and 613-635; these read YVCN…QRIH, YVCI…QRTH, YVCM…QRVH, YQCS…HRIH, YECK…QRIH, YVCI…QRIH, YECS…HKIH, YECS…QRIH, CECN…QKVH, CECS…QKVH, YNCT…QRIH, and YECG…QKVH.

This sequence belongs to the krueppel C2H2-type zinc-finger protein family.

The protein resides in the nucleus. Functionally, may be involved in transcriptional regulation. The protein is Zinc finger protein 549 (ZNF549) of Homo sapiens (Human).